Reading from the N-terminus, the 236-residue chain is Zinc finger AN1 domain-containing stress-associated protein 13 (236 aa).

Disordered stretches follow at residues 48–81 (KEGRSGGGGGSEGQRTDSRLQLPTTSIVDSPGKR) and 150–173 (TVPEGIPVDEGAMPPPPPPRAKTK). Residues 66 to 75 (RLQLPTTSIV) show a composition bias toward polar residues. An AN1-type; degenerate zinc finger spans residues 170–216 (AKTKSRCAACGRRVGLMGFECRCGAVFCGAHPLLGQARLWLRLQGRA). Cysteine 176, cysteine 179, cysteine 197, and histidine 200 together coordinate Zn(2+).

May be involved in environmental stress response. This Oryza sativa subsp. japonica (Rice) protein is Zinc finger AN1 domain-containing stress-associated protein 13 (SAP13).